Here is a 314-residue protein sequence, read N- to C-terminus: Ribosomal protein uL3 glutamine methyltransferase (314 aa).

The protein belongs to the protein N5-glutamine methyltransferase family. PrmB subfamily.

It catalyses the reaction L-glutaminyl-[ribosomal protein uL3] + S-adenosyl-L-methionine = N(5)-methyl-L-glutaminyl-[ribosomal protein uL3] + S-adenosyl-L-homocysteine + H(+). Functionally, methylates large ribosomal subunit protein uL3 on a specific glutamine residue. The polypeptide is Ribosomal protein uL3 glutamine methyltransferase (Vibrio cholerae serotype O1 (strain ATCC 39315 / El Tor Inaba N16961)).